The chain runs to 392 residues: Chalcone synthase 1 (392 aa).

Cys167 is an active-site residue.

This sequence belongs to the thiolase-like superfamily. Chalcone/stilbene synthases family.

It catalyses the reaction (E)-4-coumaroyl-CoA + 3 malonyl-CoA + 3 H(+) = 2',4,4',6'-tetrahydroxychalcone + 3 CO2 + 4 CoA. It functions in the pathway secondary metabolite biosynthesis; flavonoid biosynthesis. Its function is as follows. The primary product of this enzyme is 4,2',4',6'-tetrahydroxychalcone (also termed naringenin-chalcone or chalcone) which can under specific conditions spontaneously isomerize into naringenin. The protein is Chalcone synthase 1 (CHS1) of Secale cereale (Rye).